Consider the following 447-residue polypeptide: Exodeoxyribonuclease 7 large subunit (447 aa).

It belongs to the XseA family. In terms of assembly, heterooligomer composed of large and small subunits.

The protein localises to the cytoplasm. The enzyme catalyses Exonucleolytic cleavage in either 5'- to 3'- or 3'- to 5'-direction to yield nucleoside 5'-phosphates.. In terms of biological role, bidirectionally degrades single-stranded DNA into large acid-insoluble oligonucleotides, which are then degraded further into small acid-soluble oligonucleotides. In Lactiplantibacillus plantarum (strain ATCC BAA-793 / NCIMB 8826 / WCFS1) (Lactobacillus plantarum), this protein is Exodeoxyribonuclease 7 large subunit.